Reading from the N-terminus, the 283-residue chain is ATP synthase gamma chain (283 aa).

The protein belongs to the ATPase gamma chain family. F-type ATPases have 2 components, CF(1) - the catalytic core - and CF(0) - the membrane proton channel. CF(1) has five subunits: alpha(3), beta(3), gamma(1), delta(1), epsilon(1). CF(0) has three main subunits: a, b and c.

Its subcellular location is the cell membrane. In terms of biological role, produces ATP from ADP in the presence of a proton gradient across the membrane. The gamma chain is believed to be important in regulating ATPase activity and the flow of protons through the CF(0) complex. The sequence is that of ATP synthase gamma chain from Exiguobacterium sibiricum (strain DSM 17290 / CCUG 55495 / CIP 109462 / JCM 13490 / 255-15).